Here is a 137-residue protein sequence, read N- to C-terminus: Putative pre-16S rRNA nuclease (137 aa).

The protein belongs to the YqgF nuclease family.

The protein resides in the cytoplasm. Could be a nuclease involved in processing of the 5'-end of pre-16S rRNA. The chain is Putative pre-16S rRNA nuclease from Actinobacillus pleuropneumoniae serotype 5b (strain L20).